Here is a 314-residue protein sequence, read N- to C-terminus: Acetaldehyde dehydrogenase 1 (314 aa).

15-18 (SGNI) lines the NAD(+) pocket. C133 acts as the Acyl-thioester intermediate in catalysis. NAD(+) contacts are provided by residues 164 to 172 (SAGPGTRAN) and N291.

This sequence belongs to the acetaldehyde dehydrogenase family.

It carries out the reaction acetaldehyde + NAD(+) + CoA = acetyl-CoA + NADH + H(+). This chain is Acetaldehyde dehydrogenase 1, found in Paraburkholderia xenovorans (strain LB400).